A 145-amino-acid polypeptide reads, in one-letter code: D-aminoacyl-tRNA deacylase (145 aa).

The short motif at Gly137–Pro138 is the Gly-cisPro motif, important for rejection of L-amino acids element.

It belongs to the DTD family. In terms of assembly, homodimer.

The protein resides in the cytoplasm. It carries out the reaction glycyl-tRNA(Ala) + H2O = tRNA(Ala) + glycine + H(+). The enzyme catalyses a D-aminoacyl-tRNA + H2O = a tRNA + a D-alpha-amino acid + H(+). Its function is as follows. An aminoacyl-tRNA editing enzyme that deacylates mischarged D-aminoacyl-tRNAs. Also deacylates mischarged glycyl-tRNA(Ala), protecting cells against glycine mischarging by AlaRS. Acts via tRNA-based rather than protein-based catalysis; rejects L-amino acids rather than detecting D-amino acids in the active site. By recycling D-aminoacyl-tRNA to D-amino acids and free tRNA molecules, this enzyme counteracts the toxicity associated with the formation of D-aminoacyl-tRNA entities in vivo and helps enforce protein L-homochirality. This chain is D-aminoacyl-tRNA deacylase, found in Shewanella amazonensis (strain ATCC BAA-1098 / SB2B).